The chain runs to 845 residues: Beta-mannosidase B (845 aa).

N252 carries N-linked (GlcNAc...) asparagine glycosylation. Residue E432 is the Proton donor of the active site. N-linked (GlcNAc...) asparagine glycans are attached at residues N717 and N723.

This sequence belongs to the glycosyl hydrolase 2 family. Beta-mannosidase B subfamily.

It catalyses the reaction Hydrolysis of terminal, non-reducing beta-D-mannose residues in beta-D-mannosides.. It participates in glycan metabolism; N-glycan degradation. In terms of biological role, exoglycosidase that cleaves the single beta-linked mannose residue from the non-reducing end of beta-mannosidic oligosaccharides of various complexity and length. Prefers mannobiose over mannotriose and has no activity against polymeric mannan. Is also severely restricted by galactosyl substitutions at the +1 subsite. The chain is Beta-mannosidase B (mndB) from Aspergillus fumigatus (strain ATCC MYA-4609 / CBS 101355 / FGSC A1100 / Af293) (Neosartorya fumigata).